The primary structure comprises 729 residues: MDKATIKAHKINEQEYEEILKILGREPNLLELGIFSAMWSEHCSYKSSKKYLNGFPTKAPWVIQGPGENAGVIDVGGGVAAVFKMESHNHPSFIEPFQGAATGVGGILRDVFTMGARVVANMNSLRFGEVCGDSENARKQRYLLKGAVAGIGHYGNCMGIPTVGGETTFDASFNGNILVNAFALGLVKSDEIFYGKAEGIGNPVIYVGSKTGRDGLGGAVMASDSFSDANKSLRPTVQVGDPFAEKLLMEACLELFKKDYIVGIQDMGAAGLTSSSFEMAGRSGSGMKMQLDRVPMREEGMSPYELMLSESQERMLICAKKGCEQKVLEIFKKWDLDAEVIGEVTDSGQMQLYWHGELVGQIPIKPLSEAAPVLDRPTARPKYLDEIKNLQIPKDIDNKTAFLKLLRESEILNKALIYDQYDANIQTNTIKQPGYLGAAVIRIKETGKALAMAAQCDPRANFVGPKIGAARAVAAAGRKVAMSGAMPLAITDCLNYGNPQNPEVMWQFAQGCEGIKEACRELNTPVVSGNVSLYNDTDGVSVYPTPAIVSVGVNDDARANLKSVFGSAGTAIYLLGETKGEFAASLYVKALFDVVGGTLSEIDYKKERALWELVIAANKAGVLEFANSVGVGGVAMSLAKMACISGIGAECKFDVAQANFIFDESFSRALVGVTSEAKFSELAAKFGVKFEKIGVTGGDKFRLNEIDENLKEISEIYFNEFANIIKQED.

The active site involves His42. Residues Tyr45 and Lys84 each coordinate ATP. Position 86 (Glu86) interacts with Mg(2+). Residues 87-90 (SHNH) and Arg109 contribute to the substrate site. Residue His88 is the Proton acceptor of the active site. Residue Asp110 coordinates Mg(2+). Gln238 provides a ligand contact to substrate. Asp266 contacts Mg(2+). 310–312 (ESQ) contacts substrate. Asp492 and Gly529 together coordinate ATP. A Mg(2+)-binding site is contributed by Asn530. A substrate-binding site is contributed by Ser532.

The protein belongs to the FGAMS family. As to quaternary structure, monomer. Part of the FGAM synthase complex composed of 1 PurL, 1 PurQ and 2 PurS subunits.

It is found in the cytoplasm. It catalyses the reaction N(2)-formyl-N(1)-(5-phospho-beta-D-ribosyl)glycinamide + L-glutamine + ATP + H2O = 2-formamido-N(1)-(5-O-phospho-beta-D-ribosyl)acetamidine + L-glutamate + ADP + phosphate + H(+). The protein operates within purine metabolism; IMP biosynthesis via de novo pathway; 5-amino-1-(5-phospho-D-ribosyl)imidazole from N(2)-formyl-N(1)-(5-phospho-D-ribosyl)glycinamide: step 1/2. Part of the phosphoribosylformylglycinamidine synthase complex involved in the purines biosynthetic pathway. Catalyzes the ATP-dependent conversion of formylglycinamide ribonucleotide (FGAR) and glutamine to yield formylglycinamidine ribonucleotide (FGAM) and glutamate. The FGAM synthase complex is composed of three subunits. PurQ produces an ammonia molecule by converting glutamine to glutamate. PurL transfers the ammonia molecule to FGAR to form FGAM in an ATP-dependent manner. PurS interacts with PurQ and PurL and is thought to assist in the transfer of the ammonia molecule from PurQ to PurL. This Campylobacter curvus (strain 525.92) protein is Phosphoribosylformylglycinamidine synthase subunit PurL.